The sequence spans 309 residues: Olfactory receptor 14A16 (309 aa).

Residues 1–23 (MANLTIVTEFILMGFSTNKNMCI) are Extracellular-facing. A glycan (N-linked (GlcNAc...) asparagine) is linked at asparagine 3. The chain crosses the membrane as a helical span at residues 24–44 (LHSILFLLIYLCALMGNVLII). The Cytoplasmic portion of the chain corresponds to 45–52 (MITTLDHH). The chain crosses the membrane as a helical span at residues 53 to 73 (LHTPVYFFLKNLSFLDLCLIS). Residues 74 to 97 (VTAPKSIANSLIHNNSISFLGCVS) are Extracellular-facing. Residue asparagine 87 is glycosylated (N-linked (GlcNAc...) asparagine). Cysteine 95 and cysteine 187 form a disulfide bridge. Residues 98 to 118 (QVFLLLSSASAELLLLTVMSF) traverse the membrane as a helical segment. The Cytoplasmic portion of the chain corresponds to 119–131 (DRYTAICHPLHYD). Residues 132 to 152 (VIMDRSTCVQRATVSWLYGGL) traverse the membrane as a helical segment. The Extracellular portion of the chain corresponds to 153 to 194 (IAVMHTAGTFSLSYCGSNMVHQFFCDIPQLLAISCSENLIRE). The helical transmembrane segment at 195-215 (IALILINVVLDFCCFIVIIIT) threads the bilayer. Residues 216 to 235 (YVHVFSTVKKIPSTEGQSKA) are Cytoplasmic-facing. Residues 236–255 (YSICLPHLLVVLFLSTGFIA) form a helical membrane-spanning segment. Over 256-268 (YLKPASESPSILD) the chain is Extracellular. The chain crosses the membrane as a helical span at residues 269–289 (AVISVFYTMLPPTFNPIIYSL). At 290–309 (RNKAIKVALGMLIKGKLTKK) the chain is on the cytoplasmic side.

The protein belongs to the G-protein coupled receptor 1 family.

It localises to the cell membrane. Odorant receptor. This is Olfactory receptor 14A16 (OR14A16) from Homo sapiens (Human).